The chain runs to 425 residues: Sodium-dependent glucose transporter 1A (425 aa).

The next 11 helical transmembrane spans lie at 35 to 55 (LIFV…GVLF), 61 to 81 (FFLL…IPFC), 84 to 104 (AVLL…VDTG), 123 to 143 (ALHF…KLAW), 183 to 203 (WAYA…FGLF), 228 to 248 (ALLC…ITYG), 271 to 291 (SIFW…ATFL), 294 to 314 (GTMI…LVLF), 320 to 340 (CLWI…PSGI), 355 to 375 (AFFV…IGIL), and 382 to 402 (LPVV…LFPV).

Belongs to the major facilitator superfamily.

Its subcellular location is the apical cell membrane. In terms of biological role, may function as a sodium-dependent glucose transporter. Potential channels for urea in the inner medulla of kidney. The polypeptide is Sodium-dependent glucose transporter 1A (Mus musculus (Mouse)).